The chain runs to 293 residues: NAD kinase (293 aa).

D73 (proton acceptor) is an active-site residue. Residues 73–74 (DG), 147–148 (NE), R175, D177, and 188–193 (TAYSMS) each bind NAD(+).

This sequence belongs to the NAD kinase family. A divalent metal cation is required as a cofactor.

The protein resides in the cytoplasm. The enzyme catalyses NAD(+) + ATP = ADP + NADP(+) + H(+). In terms of biological role, involved in the regulation of the intracellular balance of NAD and NADP, and is a key enzyme in the biosynthesis of NADP. Catalyzes specifically the phosphorylation on 2'-hydroxyl of the adenosine moiety of NAD to yield NADP. In Colwellia psychrerythraea (strain 34H / ATCC BAA-681) (Vibrio psychroerythus), this protein is NAD kinase.